The chain runs to 247 residues: Carboxy-S-adenosyl-L-methionine synthase (247 aa).

Residues Tyr-39, 64 to 66 (GCS), 89 to 90 (DN), 117 to 118 (DI), Asn-132, and Arg-199 contribute to the S-adenosyl-L-methionine site.

This sequence belongs to the class I-like SAM-binding methyltransferase superfamily. Cx-SAM synthase family. As to quaternary structure, homodimer.

The enzyme catalyses prephenate + S-adenosyl-L-methionine = carboxy-S-adenosyl-L-methionine + 3-phenylpyruvate + H2O. Its function is as follows. Catalyzes the conversion of S-adenosyl-L-methionine (SAM) to carboxy-S-adenosyl-L-methionine (Cx-SAM). In Salmonella choleraesuis (strain SC-B67), this protein is Carboxy-S-adenosyl-L-methionine synthase.